Here is a 96-residue protein sequence, read N- to C-terminus: UPF0184 protein CG14818 (96 aa).

Disordered regions lie at residues 1–28 and 70–96; these read MSPK…LQEM and IAEE…AAPK. The segment covering 8-21 has biased composition (polar residues); it reads DPSSSGDSGNTNVQ. The stretch at 21-77 forms a coiled coil; the sequence is QEADLQEMEDVNNSLDALSCALDAVEQRTDDIMSQLRELLNSNREIRRLIAEENDNA. A compositionally biased stretch (acidic residues) spans 72-85; it reads EENDNAPESGDDNM.

It belongs to the UPF0184 (EST00098) family.

This Drosophila melanogaster (Fruit fly) protein is UPF0184 protein CG14818.